The chain runs to 81 residues: U1-sicaritoxin-Li1c (81 aa).

Positions 1–16 (ARGDAEKWESLISEER) are excised as a propeptide. Intrachain disulfides connect Cys-18–Cys-35, Cys-26–Cys-40, Cys-34–Cys-53, and Cys-42–Cys-51. Arg-62 carries the post-translational modification Arginine amide. Residues 66–81 (ALMLDPETHRLLFSED) constitute a propeptide that is removed on maturation.

The protein belongs to the neurotoxin 28 (Litx) family. As to expression, expressed by the venom gland.

It localises to the secreted. Toxin active against insects (S.frugiperda larvae). May act on sodium (Nav) or calcium (Cav) channels. The protein is U1-sicaritoxin-Li1c of Loxosceles intermedia (Brown spider).